Here is a 197-residue protein sequence, read N- to C-terminus: DNA-directed RNA polymerases I, II, and III subunit rpabc1 (197 aa).

This sequence belongs to the archaeal Rpo5/eukaryotic RPB5 RNA polymerase subunit family. In terms of assembly, component of the RNA polymerase I (Pol I), RNA polymerase II (Pol II) and RNA polymerase III (Pol III) complexes consisting of at least 13, 12 and 17 subunits, respectively. In RNA Pol II, this subunit is present in 2-fold molar excess over the other subunits.

The protein localises to the nucleus. In terms of biological role, DNA-dependent RNA polymerase catalyzes the transcription of DNA into RNA using the four ribonucleoside triphosphates as substrates. Common component of RNA polymerases I, II and III which synthesize ribosomal RNA precursors, mRNA precursors and many functional non-coding RNAs, and small RNAs, such as 5S rRNA and tRNAs, respectively. Pol II is the central component of the basal RNA polymerase II transcription machinery. Pols are composed of mobile elements that move relative to each other. In Pol II, RPB5 is part of the lower jaw surrounding the central large cleft and thought to grab the incoming DNA template. Seems to be the major component in this process. This Dictyostelium discoideum (Social amoeba) protein is DNA-directed RNA polymerases I, II, and III subunit rpabc1 (polr2e).